A 426-amino-acid chain; its full sequence is Enolase (426 aa).

Gln-163 contacts (2R)-2-phosphoglycerate. Residue Glu-205 is the Proton donor of the active site. The Mg(2+) site is built by Asp-242, Glu-283, and Asp-310. (2R)-2-phosphoglycerate-binding residues include Lys-335, Arg-364, Ser-365, and Lys-386. Residue Lys-335 is the Proton acceptor of the active site.

It belongs to the enolase family. Mg(2+) is required as a cofactor.

Its subcellular location is the cytoplasm. The protein localises to the secreted. It is found in the cell surface. It carries out the reaction (2R)-2-phosphoglycerate = phosphoenolpyruvate + H2O. Its pathway is carbohydrate degradation; glycolysis; pyruvate from D-glyceraldehyde 3-phosphate: step 4/5. Functionally, catalyzes the reversible conversion of 2-phosphoglycerate (2-PG) into phosphoenolpyruvate (PEP). It is essential for the degradation of carbohydrates via glycolysis. The protein is Enolase of Clavibacter michiganensis subsp. michiganensis (strain NCPPB 382).